The following is a 354-amino-acid chain: tRNA N6-adenosine threonylcarbamoyltransferase (354 aa).

His-111 and His-115 together coordinate Fe cation. Substrate contacts are provided by residues 134-138 (LVSGG), Asp-167, Gly-180, and Asn-279. Fe cation is bound at residue Asp-319.

This sequence belongs to the KAE1 / TsaD family. The cofactor is Fe(2+).

Its subcellular location is the cytoplasm. The catalysed reaction is L-threonylcarbamoyladenylate + adenosine(37) in tRNA = N(6)-L-threonylcarbamoyladenosine(37) in tRNA + AMP + H(+). Its function is as follows. Required for the formation of a threonylcarbamoyl group on adenosine at position 37 (t(6)A37) in tRNAs that read codons beginning with adenine. Is involved in the transfer of the threonylcarbamoyl moiety of threonylcarbamoyl-AMP (TC-AMP) to the N6 group of A37, together with TsaE and TsaB. TsaD likely plays a direct catalytic role in this reaction. This is tRNA N6-adenosine threonylcarbamoyltransferase from Neisseria meningitidis.